The following is a 116-amino-acid chain: ATP synthase lipid-binding protein, mitochondrial (116 aa).

A mitochondrion-targeting transit peptide spans 1–24 (MYCQRLALPLTRSLLASRAPLALR). The chain crosses the membrane as a helical span at residues 57 to 77 (VGVAGSGAGIGNVFGALVIGY). At Lys-84 the chain carries N6,N6,N6-trimethyllysine. Residues 92-112 (ILGFALSEAMGLFCLTMGFMI) form a helical membrane-spanning segment.

The protein belongs to the ATPase C chain family. As to quaternary structure, F-type ATPases have 2 components, CF(1) - the catalytic core - and CF(0) - the membrane proton channel. CF(1) has five subunits: alpha(3), beta(3), gamma(1), delta(1), epsilon(1). CF(0) has three main subunits: a, b and c. Trimethylated by ATPSCKMT at Lys-84. Methylation may be required for proper incorporation of the C subunit into the ATP synthase complex and mitochondrial respiration.

The protein resides in the mitochondrion membrane. Its function is as follows. Mitochondrial membrane ATP synthase (F(1)F(0) ATP synthase or Complex V) produces ATP from ADP in the presence of a proton gradient across the membrane which is generated by electron transport complexes of the respiratory chain. F-type ATPases consist of two structural domains, F(1) - containing the extramembraneous catalytic core and F(0) - containing the membrane proton channel, linked together by a central stalk and a peripheral stalk. During catalysis, ATP synthesis in the catalytic domain of F(1) is coupled via a rotary mechanism of the central stalk subunits to proton translocation. Part of the complex F(0) domain. A homomeric c-ring of probably 10 subunits is part of the complex rotary element. The protein is ATP synthase lipid-binding protein, mitochondrial of Caenorhabditis briggsae.